Reading from the N-terminus, the 221-residue chain is MSDQINVLSMQQQQQQQQQQQQVYMSPQAENLNHMYLLVNKLVKQLRENQAEKAKILRNIDILSGSLNKYETSEEPHDTTENIALFNRFLEQRGKAPITEKEQLSNNLDENAKDDVMLGVLKRQNSMLRKSLQESKQVTLESMDLLSYSEDSLNYIVAQLRGNILMHHKETIKLIRQKFQTETIPLEDEEFKMYLENVNGLQKLTDISHTYRLLLRLHAQD.

Component of a complex at least composed of FAR3, FAR7, FAR8, FAR10, FAR11 and VPS64.

Participates in the control of the reentry into the cell cycle following pheromone treatment. This is Factor arrest protein 7 (FAR7) from Saccharomyces cerevisiae (strain ATCC 204508 / S288c) (Baker's yeast).